The sequence spans 258 residues: Regulatory protein RecX (258 aa).

Belongs to the RecX family.

The protein localises to the cytoplasm. In terms of biological role, modulates RecA activity. The polypeptide is Regulatory protein RecX (Streptococcus pneumoniae serotype 19F (strain G54)).